The following is a 728-amino-acid chain: MDKETIKAHKISDEEYTQILEILGREPNLLELGVISAMWSEHCSYKSSKKYLNGFPTKAPWVIQGPGENAGVIDIGQGMAAVFKVESHNHPSFIEPFAGAATGVGGILRDVFTMGARVVAGLNSLKFGNIHNEKCSKHQKYLVKGVVNGISHYGNCMGVPTIGGECAFDECFNGNILVNAFALGVCKSEDIFYAKAEGVGNPVIYVGSKTGRDGLGGAVMASDSFNEESKSLRPTVQIGDPFSEKLLMEACLELFKTDYIVGIQDMGAAGLTSSSFEMAGRSGSGMKLYLDKTPIRESGMTPYELMLSESQERMLICAKKGYEDKVIEIFKKWDLDAVVIGEVTNTGKMELFWHDELVGLIPIEPLSEKAPILSRPISEPKYLSEIKDYKFELKLSIQELFIQMLQNENINNKAFIYDQFDSSVQTNTIKADGRLGASAIRIKENGASVAMAIECNSRLNYVNPKIGAALAVASAGRKVACTGAKPLAISDCLNYGNPQNPEVMWQFAQGCEGIKEACKELNTPVVSGNVSLYNETEGVSIYPSPTIVSVGVLEDANKTLKASFEKENLSVYLLGESLGEFGGSMVMKIQDKKVSGSLKELDYKAEIALWDLLYKANQNSLLECANSVGIGGIAMTLAKMFAISSVGANLTSGFDDEKMIFDESASRAIVGLSKENEEAFLNLAKEFGVKAYKLGVSTSQKHFKLDSIELSKAELDKLYFESFKEQIQ.

The active site involves histidine 42. Residues tyrosine 45 and lysine 84 each contribute to the ATP site. Glutamate 86 serves as a coordination point for Mg(2+). Residues 87–90 (SHNH) and arginine 109 contribute to the substrate site. Histidine 88 acts as the Proton acceptor in catalysis. Aspartate 110 is a binding site for Mg(2+). Residue glutamine 237 participates in substrate binding. Mg(2+) is bound at residue aspartate 265. 309-311 (ESQ) is a binding site for substrate. Residues aspartate 491 and glycine 528 each contribute to the ATP site. Residue asparagine 529 coordinates Mg(2+). Serine 531 contacts substrate.

The protein belongs to the FGAMS family. Monomer. Part of the FGAM synthase complex composed of 1 PurL, 1 PurQ and 2 PurS subunits.

The protein localises to the cytoplasm. The catalysed reaction is N(2)-formyl-N(1)-(5-phospho-beta-D-ribosyl)glycinamide + L-glutamine + ATP + H2O = 2-formamido-N(1)-(5-O-phospho-beta-D-ribosyl)acetamidine + L-glutamate + ADP + phosphate + H(+). It participates in purine metabolism; IMP biosynthesis via de novo pathway; 5-amino-1-(5-phospho-D-ribosyl)imidazole from N(2)-formyl-N(1)-(5-phospho-D-ribosyl)glycinamide: step 1/2. Part of the phosphoribosylformylglycinamidine synthase complex involved in the purines biosynthetic pathway. Catalyzes the ATP-dependent conversion of formylglycinamide ribonucleotide (FGAR) and glutamine to yield formylglycinamidine ribonucleotide (FGAM) and glutamate. The FGAM synthase complex is composed of three subunits. PurQ produces an ammonia molecule by converting glutamine to glutamate. PurL transfers the ammonia molecule to FGAR to form FGAM in an ATP-dependent manner. PurS interacts with PurQ and PurL and is thought to assist in the transfer of the ammonia molecule from PurQ to PurL. The sequence is that of Phosphoribosylformylglycinamidine synthase subunit PurL from Campylobacter jejuni (strain RM1221).